The primary structure comprises 346 residues: DNA ligase (346 aa).

ATP is bound by residues 32 to 35 (DCKY), R39, 55 to 57 (RVS), E93, E142, and R149. The N6-AMP-lysine intermediate role is filled by K34. An a divalent metal cation-binding site is contributed by E223. ATP is bound by residues K238 and K244.

This sequence belongs to the ATP-dependent DNA ligase family. A divalent metal cation is required as a cofactor.

The catalysed reaction is ATP + (deoxyribonucleotide)n-3'-hydroxyl + 5'-phospho-(deoxyribonucleotide)m = (deoxyribonucleotide)n+m + AMP + diphosphate.. DNA ligase, which is expressed in the early stage of lytic development, has been implicated in T7 DNA synthesis and genetic recombination. It may also play a role in T7 DNA repair. In Enterobacteria phage T3 (Bacteriophage T3), this protein is DNA ligase (1.3).